A 134-amino-acid chain; its full sequence is ATP synthase epsilon chain (134 aa).

This sequence belongs to the ATPase epsilon chain family. In terms of assembly, F-type ATPases have 2 components, CF(1) - the catalytic core - and CF(0) - the membrane proton channel. CF(1) has five subunits: alpha(3), beta(3), gamma(1), delta(1), epsilon(1). CF(0) has three main subunits: a, b and c.

The protein resides in the cellular thylakoid membrane. Functionally, produces ATP from ADP in the presence of a proton gradient across the membrane. This is ATP synthase epsilon chain from Prochlorococcus marinus (strain MIT 9215).